We begin with the raw amino-acid sequence, 298 residues long: Probable GTP 3',8-cyclase (298 aa).

Residues 4–230 form the Radical SAM core domain; sequence KFGREIRSLR…RKKYIVDGLE (227 aa). Arg-13 serves as a coordination point for GTP. [4Fe-4S] cluster is bound by residues Cys-20 and Cys-24. Tyr-26 lines the S-adenosyl-L-methionine pocket. A [4Fe-4S] cluster-binding site is contributed by Cys-27. Lys-61 is a binding site for GTP. Residue Gly-65 participates in S-adenosyl-L-methionine binding. A GTP-binding site is contributed by Thr-91. Ser-115 lines the S-adenosyl-L-methionine pocket. GTP is bound at residue Lys-152. Positions 243 and 246 each coordinate [4Fe-4S] cluster. Residue 248–250 coordinates GTP; the sequence is RIR. Cys-260 contacts [4Fe-4S] cluster.

It belongs to the radical SAM superfamily. MoaA family. [4Fe-4S] cluster is required as a cofactor.

The catalysed reaction is GTP + AH2 + S-adenosyl-L-methionine = (8S)-3',8-cyclo-7,8-dihydroguanosine 5'-triphosphate + 5'-deoxyadenosine + L-methionine + A + H(+). It participates in cofactor biosynthesis; molybdopterin biosynthesis. Its function is as follows. Catalyzes the cyclization of GTP to (8S)-3',8-cyclo-7,8-dihydroguanosine 5'-triphosphate. The polypeptide is Probable GTP 3',8-cyclase (Methanocaldococcus jannaschii (strain ATCC 43067 / DSM 2661 / JAL-1 / JCM 10045 / NBRC 100440) (Methanococcus jannaschii)).